The primary structure comprises 174 residues: Shikimate kinase 2 (174 aa).

Residue 12–17 coordinates ATP; the sequence is GAGKTT. Positions 16 and 32 each coordinate Mg(2+). Substrate contacts are provided by aspartate 34, arginine 58, and glycine 79. An LID domain region spans residues 112–126; that stretch reads AEDPEDAQRPSLTGK. An ATP-binding site is contributed by arginine 120. Arginine 139 lines the substrate pocket. ATP is bound at residue glutamine 155.

The protein belongs to the shikimate kinase family. AroL subfamily. Monomer. Mg(2+) is required as a cofactor.

It localises to the cytoplasm. The catalysed reaction is shikimate + ATP = 3-phosphoshikimate + ADP + H(+). It functions in the pathway metabolic intermediate biosynthesis; chorismate biosynthesis; chorismate from D-erythrose 4-phosphate and phosphoenolpyruvate: step 5/7. Functionally, catalyzes the specific phosphorylation of the 3-hydroxyl group of shikimic acid using ATP as a cosubstrate. The chain is Shikimate kinase 2 from Yersinia enterocolitica serotype O:8 / biotype 1B (strain NCTC 13174 / 8081).